The sequence spans 83 residues: Cytochrome b559 subunit alpha (83 aa).

Residues 21-35 (VIHSITIPSLFIAGW) form a helical membrane-spanning segment. Heme is bound at residue histidine 23.

Belongs to the PsbE/PsbF family. In terms of assembly, heterodimer of an alpha subunit and a beta subunit. PSII is composed of 1 copy each of membrane proteins PsbA, PsbB, PsbC, PsbD, PsbE, PsbF, PsbH, PsbI, PsbJ, PsbK, PsbL, PsbM, PsbT, PsbX, PsbY, PsbZ, Psb30/Ycf12, at least 3 peripheral proteins of the oxygen-evolving complex and a large number of cofactors. It forms dimeric complexes. The cofactor is heme b.

Its subcellular location is the plastid. The protein resides in the chloroplast thylakoid membrane. Its function is as follows. This b-type cytochrome is tightly associated with the reaction center of photosystem II (PSII). PSII is a light-driven water:plastoquinone oxidoreductase that uses light energy to abstract electrons from H(2)O, generating O(2) and a proton gradient subsequently used for ATP formation. It consists of a core antenna complex that captures photons, and an electron transfer chain that converts photonic excitation into a charge separation. The protein is Cytochrome b559 subunit alpha of Psilotum nudum (Whisk fern).